We begin with the raw amino-acid sequence, 470 residues long: MNPNQKIITIGSVSLGLVVLNILLHIVSITITVLVLPGNGNNPSCNETVIREYNETVRIERVTQWHNTNVIEYLERPESDHFMNNTESLCDAKGFAPFSKDNGIRIGSRGHVFVIREPFVSCSPTECRTFFLTQGSLLNDKHSNGTVKDRSPYRTLMSVQIGQSPNVYQARFEAVAWSATACHDGKKWMTIGVTGPDAKAVAVVHYGGIPTDVINSWAGDILRTQESSCTCIQGECYWVMTDGPANRQAQYRAFKAKQGKIIGQTEISFNGGHIEECSCYPNEGKVECVCRDNWTGTNRPVLVISPDLSYRVGYLCAGLPSDTPRGEDSQFTGSCTSPMGNQGYGVKGFGFRQGNDVWMGRTISRTSRSGFEILKVRNGWVQNSKEQIKRQVVVDNLNWSGYSGSFTLPVELTKRNCLVPCFWVEMIRGKPEEKTIWTSSSSIVMCGVDHEIADWSWHDGAILPFDIDKM.

The Intravirion portion of the chain corresponds to 1-14 (MNPNQKIITIGSVS). Residues 11–32 (GSVSLGLVVLNILLHIVSITIT) are involved in apical transport and lipid raft association. Residues 15-35 (LGLVVLNILLHIVSITITVLV) form a helical membrane-spanning segment. Residues 32 to 86 (TVLVLPGNGNNPSCNETVIREYNETVRIERVTQWHNTNVIEYLERPESDHFMNNT) are hypervariable stalk region. At 36-470 (LPGNGNNPSC…AILPFDIDKM (435 aa)) the chain is on the virion surface side. N-linked (GlcNAc...) asparagine; by host glycans are attached at residues Asn-46, Asn-54, and Asn-84. The segment at 89–470 (LCDAKGFAPF…AILPFDIDKM (382 aa)) is head of neuraminidase. 8 disulfides stabilise this stretch: Cys-90/Cys-417, Cys-122/Cys-127, Cys-182/Cys-229, Cys-231/Cys-236, Cys-277/Cys-290, Cys-279/Cys-288, Cys-316/Cys-335, and Cys-421/Cys-446. Arg-116 is a substrate binding site. Asn-144 carries N-linked (GlcNAc...) asparagine; by host glycosylation. Asp-149 (proton donor/acceptor) is an active-site residue. Residue Arg-150 participates in substrate binding. Residue 275-276 (EE) participates in substrate binding. Arg-291 contributes to the substrate binding site. Ca(2+) is bound at residue Asp-292. N-linked (GlcNAc...) asparagine; by host glycosylation is present at Asn-293. Positions 296 and 322 each coordinate Ca(2+). Residue Arg-368 participates in substrate binding. An N-linked (GlcNAc...) asparagine; by host glycan is attached at Asn-398. Tyr-402 acts as the Nucleophile in catalysis.

Belongs to the glycosyl hydrolase 34 family. Homotetramer. Requires Ca(2+) as cofactor. Post-translationally, N-glycosylated.

It localises to the virion membrane. It is found in the host apical cell membrane. The enzyme catalyses Hydrolysis of alpha-(2-&gt;3)-, alpha-(2-&gt;6)-, alpha-(2-&gt;8)- glycosidic linkages of terminal sialic acid residues in oligosaccharides, glycoproteins, glycolipids, colominic acid and synthetic substrates.. Inhibited by the neuraminidase inhibitors zanamivir (Relenza) and oseltamivir (Tamiflu). These drugs interfere with the release of progeny virus from infected cells and are effective against all influenza strains. Resistance to neuraminidase inhibitors is quite rare. Its function is as follows. Catalyzes the removal of terminal sialic acid residues from viral and cellular glycoconjugates. Cleaves off the terminal sialic acids on the glycosylated HA during virus budding to facilitate virus release. Additionally helps virus spread through the circulation by further removing sialic acids from the cell surface. These cleavages prevent self-aggregation and ensure the efficient spread of the progeny virus from cell to cell. Otherwise, infection would be limited to one round of replication. Described as a receptor-destroying enzyme because it cleaves a terminal sialic acid from the cellular receptors. May facilitate viral invasion of the upper airways by cleaving the sialic acid moieties on the mucin of the airway epithelial cells. Likely to plays a role in the budding process through its association with lipid rafts during intracellular transport. May additionally display a raft-association independent effect on budding. Plays a role in the determination of host range restriction on replication and virulence. Sialidase activity in late endosome/lysosome traffic seems to enhance virus replication. The protein is Neuraminidase of Aves.